A 142-amino-acid chain; its full sequence is SLSDKDKAAVRALWSKIGKSADAIGNDALSRMIVVYPQTKTYFSHWPDVTPGSPHIKAHGKKVMGGIALAVSKIDDLKTGLMELSEQHAYKLRVDPANFKILNHCILVVISTMFPKEFTPEAHVSLDKFLSGVALALAERYR.

Residue serine 1 is modified to N-acetylserine. Positions 1–142 constitute a Globin domain; the sequence is SLSDKDKAAV…VALALAERYR (142 aa). Histidine 59 contributes to the O2 binding site. Histidine 88 contacts heme b.

Belongs to the globin family. In terms of assembly, hb1 is a heterotetramer of two alpha chains and two beta chains. HbC is a heterotetramer of two alpha chains and two beta-C chains. In terms of tissue distribution, red blood cells.

Its function is as follows. Involved in oxygen transport from gills to the various peripheral tissues. In Trematomus bernacchii (Emerald rockcod), this protein is Hemoglobin subunit alpha (hba).